The primary structure comprises 1478 residues: DNA-directed RNA polymerase subunit beta' (1478 aa).

Residues Asp535, Asp537, and Asp539 each contribute to the Mg(2+) site. The Zn(2+) site is built by Cys1034, Cys1109, Cys1116, and Cys1119.

Belongs to the RNA polymerase beta' chain family. The RNAP catalytic core consists of 2 alpha, 1 beta, 1 beta' and 1 omega subunit. When a sigma factor is associated with the core the holoenzyme is formed, which can initiate transcription. Requires Mg(2+) as cofactor. The cofactor is Zn(2+).

The catalysed reaction is RNA(n) + a ribonucleoside 5'-triphosphate = RNA(n+1) + diphosphate. Its function is as follows. DNA-dependent RNA polymerase catalyzes the transcription of DNA into RNA using the four ribonucleoside triphosphates as substrates. The sequence is that of DNA-directed RNA polymerase subunit beta' from Mycoplasmopsis agalactiae (strain NCTC 10123 / CIP 59.7 / PG2) (Mycoplasma agalactiae).